We begin with the raw amino-acid sequence, 456 residues long: Cysteine synthase 2 (456 aa).

A helical transmembrane segment spans residues 9–29 (VYGTVALTAAFAAGILVTLGF).

It belongs to the cysteine synthase/cystathionine beta-synthase family. Pyridoxal 5'-phosphate is required as a cofactor.

Its subcellular location is the mitochondrion outer membrane. The catalysed reaction is O-acetyl-L-serine + hydrogen sulfide = L-cysteine + acetate. In terms of biological role, putative cysteine synthase that catalyzes the conversion of O-acetyl-L-serine (OAS) into cysteine, the last step in the cysteine biosynthesis pathway. However, in contrast to cysteine synthase cys-17, this CS-like protein may not function in cysteine biosynthesis. This is Cysteine synthase 2 from Neurospora crassa (strain ATCC 24698 / 74-OR23-1A / CBS 708.71 / DSM 1257 / FGSC 987).